A 500-amino-acid polypeptide reads, in one-letter code: Protein shisa-6 (500 aa).

An N-terminal signal peptide occupies residues 1–25; it reads MALRRLLLLLLLSLESLDLLPSVHG. Residues 26-174 are Extracellular-facing; sequence ARGRAANRTL…NKYDPEKDKT (149 aa). Residues Asn32 and Asn59 are each glycosylated (N-linked (GlcNAc...) asparagine). A disordered region spans residues 52–73; the sequence is ARGGRELNGTARAPGIPEAGSR. Residues 175 to 195 traverse the membrane as a helical segment; the sequence is NFTVYITCGVIAFVIVAGVFA. Residues 196–500 lie on the Cytoplasmic side of the membrane; sequence KVSYDKAHRP…YTASKTEVTV (305 aa). Residues 240–255 show a composition bias toward polar residues; it reads TSPKENTPVRSSSKNH. Disordered regions lie at residues 240–269 and 349–378; these read TSPKENTPVRSSSKNHYTPVRTAKQTPEKP and SQQKPLPRERPRRPIRAMSQDRVLSPDRGL. Residues Ser391, Ser397, and Ser409 each carry the phosphoserine modification. A Phosphothreonine modification is found at Thr433. The segment at 444–470 is disordered; sequence MHSHPSASNNSYATLGQSQTAAKRHAF. A compositionally biased stretch (polar residues) spans 448–464; the sequence is PSASNNSYATLGQSQTA. Thr477 carries the post-translational modification Phosphothreonine. The short motif at 497–500 is the PDZ-binding element; sequence EVTV.

The protein belongs to the shisa family. As to quaternary structure, component of the postsynaptic hippocampal AMPA-type glutamate receptor (AMPAR) complex, at least composed of pore forming AMPAR subunits GRIA1, GRIA2 and GRIA3 and AMPAR auxiliary proteins SHISA6 and SHISA7. Interacts (via PDZ-binding motif) with DLG4/PSD-95 (via PDZ domain); the interaction is direct. In terms of tissue distribution, expressed in the developing ventral mesencephalon.

The protein localises to the membrane. Its subcellular location is the postsynaptic density. Its function is as follows. Involved in maintenance of high-frequency synaptic transmission at hippocampal CA3-CA1 synapses. Regulates AMPA-type glutamate receptor (AMPAR) immobilization at postsynaptic density keeping the channels in an activated state in the presence of glutamate and preventing synaptic depression. May play a role in self-renewal and differentiation of spermatogonial stem cells by inhibiting canonical Wnt signaling pathway. The protein is Protein shisa-6 of Homo sapiens (Human).